The chain runs to 732 residues: uncharacterized protein (732 aa).

2 disordered regions span residues 38 to 90 and 226 to 629; these read TTLA…NNNK and EESP…MDYQ. A compositionally biased stretch (low complexity) spans 47 to 56; that stretch reads QQQQQQQQQQ. Positions 57-76 are enriched in polar residues; it reads PPSSSTTKEGGATTTQDNKL. Composition is skewed to low complexity over residues 77 to 89, 231 to 247, and 254 to 318; these read TANG…NNNN, TTTT…TTAA, and TTTT…GTNS. Over residues 327–338 the composition is skewed to basic residues; the sequence is KAKKGVPKKAPT. 3 stretches are compositionally biased toward low complexity: residues 339–383, 401–421, and 487–523; these read KKQP…APKT, KTSK…STTK, and SAST…IKSK. Residues 553–566 are compositionally biased toward acidic residues; it reads AAAEEQEEEEEEDN. 2 stretches are compositionally biased toward low complexity: residues 567–577 and 593–609; these read SNGIQNNNSSN and DNFS…NGLL. A compositionally biased stretch (acidic residues) spans 610 to 621; that stretch reads SEDDDDDDDDDN.

This is an uncharacterized protein from Dictyostelium discoideum (Social amoeba).